The following is a 373-amino-acid chain: 3 beta-hydroxysteroid dehydrogenase/Delta 5--&gt;4-isomerase type 2 (373 aa).

The active-site Proton acceptor is the Tyr-155. Lys-159 contributes to the NAD(+) binding site. Residues 288–308 form a helical membrane-spanning segment; sequence LPLLYWLAFLLETVSFLLRPF.

Belongs to the 3-beta-HSD family. As to expression, adrenal glands, testes and ovaries.

Its subcellular location is the endoplasmic reticulum membrane. It is found in the mitochondrion membrane. The catalysed reaction is a 3beta-hydroxy-Delta(5)-steroid + NAD(+) = a 3-oxo-Delta(5)-steroid + NADH + H(+). It catalyses the reaction a 3-oxo-Delta(5)-steroid = a 3-oxo-Delta(4)-steroid. It participates in lipid metabolism; steroid biosynthesis. Its function is as follows. 3-beta-HSD is a bifunctional enzyme, that catalyzes the oxidative conversion of Delta(5)-ene-3-beta-hydroxy steroid, and the oxidative conversion of ketosteroids. The 3-beta-HSD enzymatic system plays a crucial role in the biosynthesis of all classes of hormonal steroids. The polypeptide is 3 beta-hydroxysteroid dehydrogenase/Delta 5--&gt;4-isomerase type 2 (Hsd3b) (Rattus norvegicus (Rat)).